A 271-amino-acid chain; its full sequence is Putative phosphoenolpyruvate synthase regulatory protein (271 aa).

152–159 (GVSRCGKT) lines the ADP pocket.

This sequence belongs to the pyruvate, phosphate/water dikinase regulatory protein family. PSRP subfamily.

The catalysed reaction is [pyruvate, water dikinase] + ADP = [pyruvate, water dikinase]-phosphate + AMP + H(+). It carries out the reaction [pyruvate, water dikinase]-phosphate + phosphate + H(+) = [pyruvate, water dikinase] + diphosphate. Functionally, bifunctional serine/threonine kinase and phosphorylase involved in the regulation of the phosphoenolpyruvate synthase (PEPS) by catalyzing its phosphorylation/dephosphorylation. The protein is Putative phosphoenolpyruvate synthase regulatory protein of Legionella pneumophila (strain Lens).